A 378-amino-acid polypeptide reads, in one-letter code: Erythronate-4-phosphate dehydrogenase (378 aa).

Residues S45 and T66 each contribute to the substrate site. Positions 146 and 175 each coordinate NAD(+). The active site involves R208. D232 lines the NAD(+) pocket. E237 is an active-site residue. H254 (proton donor) is an active-site residue. Residue G257 coordinates NAD(+). Residue Y258 participates in substrate binding.

Belongs to the D-isomer specific 2-hydroxyacid dehydrogenase family. PdxB subfamily. As to quaternary structure, homodimer.

The protein resides in the cytoplasm. It catalyses the reaction 4-phospho-D-erythronate + NAD(+) = (R)-3-hydroxy-2-oxo-4-phosphooxybutanoate + NADH + H(+). The protein operates within cofactor biosynthesis; pyridoxine 5'-phosphate biosynthesis; pyridoxine 5'-phosphate from D-erythrose 4-phosphate: step 2/5. Catalyzes the oxidation of erythronate-4-phosphate to 3-hydroxy-2-oxo-4-phosphonooxybutanoate. This chain is Erythronate-4-phosphate dehydrogenase, found in Salmonella agona (strain SL483).